The following is a 397-amino-acid chain: t-SNARE affecting a late Golgi compartment protein 2 (397 aa).

The Cytoplasmic segment spans residues M1 to K317. Positions D74–V96 form a coiled coil. The residue at position 109 (S109) is a Phosphoserine. One can recognise a t-SNARE coiled-coil homology domain in the interval E244–A306. The chain crosses the membrane as a helical; Anchor for type IV membrane protein span at residues V318 to H338. Over G339 to L397 the chain is Vesicular. Residues G341–L397 are disordered. The span at N353–D374 shows a compositional bias: basic and acidic residues. Over residues T386–L397 the composition is skewed to acidic residues.

Belongs to the syntaxin family. As to quaternary structure, interacts with VPS45.

Its subcellular location is the golgi apparatus. It localises to the trans-Golgi network membrane. The protein resides in the endosome membrane. Its function is as follows. t-SNARE that functions in transport from the endosome to the late Golgi and on the endocytic pathway. The protein is t-SNARE affecting a late Golgi compartment protein 2 (TLG2) of Saccharomyces cerevisiae (strain ATCC 204508 / S288c) (Baker's yeast).